The sequence spans 179 residues: Nucleoside-triphosphatase THEP1 (179 aa).

ATP contacts are provided by residues 7 to 14 (GMPGVGKT) and 98 to 105 (IIIIDEIG).

The protein belongs to the THEP1 NTPase family.

The catalysed reaction is a ribonucleoside 5'-triphosphate + H2O = a ribonucleoside 5'-diphosphate + phosphate + H(+). Its function is as follows. Has nucleotide phosphatase activity towards ATP, GTP, CTP, TTP and UTP. May hydrolyze nucleoside diphosphates with lower efficiency. The polypeptide is Nucleoside-triphosphatase THEP1 (Pyrococcus abyssi (strain GE5 / Orsay)).